The following is a 364-amino-acid chain: Phosphoserine aminotransferase (364 aa).

Arginine 41 is a binding site for L-glutamate. Residues 75 to 76, tryptophan 100, threonine 155, and glutamine 198 contribute to the pyridoxal 5'-phosphate site; that span reads AS. The residue at position 199 (lysine 199) is an N6-(pyridoxal phosphate)lysine. 239–240 contributes to the pyridoxal 5'-phosphate binding site; sequence NT.

Belongs to the class-V pyridoxal-phosphate-dependent aminotransferase family. SerC subfamily. As to quaternary structure, homodimer. Pyridoxal 5'-phosphate is required as a cofactor.

It localises to the cytoplasm. The catalysed reaction is O-phospho-L-serine + 2-oxoglutarate = 3-phosphooxypyruvate + L-glutamate. The enzyme catalyses 4-(phosphooxy)-L-threonine + 2-oxoglutarate = (R)-3-hydroxy-2-oxo-4-phosphooxybutanoate + L-glutamate. It participates in amino-acid biosynthesis; L-serine biosynthesis; L-serine from 3-phospho-D-glycerate: step 2/3. Catalyzes the reversible conversion of 3-phosphohydroxypyruvate to phosphoserine and of 3-hydroxy-2-oxo-4-phosphonooxybutanoate to phosphohydroxythreonine. The polypeptide is Phosphoserine aminotransferase (Streptococcus thermophilus (strain ATCC BAA-250 / LMG 18311)).